Here is a 173-residue protein sequence, read N- to C-terminus: MAIVLGIDPGSRVTGYGVIRQQGRQLTYLGSGCIRTVVDDMPTRLKLIYAGVTEIITQFQPDFFAIEQVFMAKNPDSALKLGQARGAAIVAAVNLNLPVSEYAARQVKQTVVGTGAAEKSQVQHMVRSLLQLPANPQADAADALAIAITHCHLSQNTLRLGNDQMVLARGRLR.

Active-site residues include D8, E67, and D139. 3 residues coordinate Mg(2+): D8, E67, and D139.

The protein belongs to the RuvC family. As to quaternary structure, homodimer which binds Holliday junction (HJ) DNA. The HJ becomes 2-fold symmetrical on binding to RuvC with unstacked arms; it has a different conformation from HJ DNA in complex with RuvA. In the full resolvosome a probable DNA-RuvA(4)-RuvB(12)-RuvC(2) complex forms which resolves the HJ. The cofactor is Mg(2+).

It localises to the cytoplasm. It carries out the reaction Endonucleolytic cleavage at a junction such as a reciprocal single-stranded crossover between two homologous DNA duplexes (Holliday junction).. The RuvA-RuvB-RuvC complex processes Holliday junction (HJ) DNA during genetic recombination and DNA repair. Endonuclease that resolves HJ intermediates. Cleaves cruciform DNA by making single-stranded nicks across the HJ at symmetrical positions within the homologous arms, yielding a 5'-phosphate and a 3'-hydroxyl group; requires a central core of homology in the junction. The consensus cleavage sequence is 5'-(A/T)TT(C/G)-3'. Cleavage occurs on the 3'-side of the TT dinucleotide at the point of strand exchange. HJ branch migration catalyzed by RuvA-RuvB allows RuvC to scan DNA until it finds its consensus sequence, where it cleaves and resolves the cruciform DNA. This Yersinia enterocolitica serotype O:8 / biotype 1B (strain NCTC 13174 / 8081) protein is Crossover junction endodeoxyribonuclease RuvC.